The sequence spans 338 residues: tRNA(Ile)-lysidine synthase (338 aa).

Residue 23–28 (SGGLDS) participates in ATP binding.

The protein belongs to the tRNA(Ile)-lysidine synthase family.

It localises to the cytoplasm. It catalyses the reaction cytidine(34) in tRNA(Ile2) + L-lysine + ATP = lysidine(34) in tRNA(Ile2) + AMP + diphosphate + H(+). Ligates lysine onto the cytidine present at position 34 of the AUA codon-specific tRNA(Ile) that contains the anticodon CAU, in an ATP-dependent manner. Cytidine is converted to lysidine, thus changing the amino acid specificity of the tRNA from methionine to isoleucine. The chain is tRNA(Ile)-lysidine synthase from Helicobacter pylori (strain J99 / ATCC 700824) (Campylobacter pylori J99).